A 244-amino-acid chain; its full sequence is Probable metallo-hydrolase YhfI (244 aa).

Zn(2+) contacts are provided by histidine 59, histidine 61, aspartate 63, histidine 64, histidine 134, aspartate 155, and histidine 211.

It belongs to the metallo-beta-lactamase superfamily. The cofactor is Zn(2+).

The sequence is that of Probable metallo-hydrolase YhfI (yhfI) from Bacillus subtilis (strain 168).